Consider the following 153-residue polypeptide: UPF0251 protein Daud_0090 (153 aa).

Positions 129–138 are enriched in basic and acidic residues; sequence ELMTRPERCS. Residues 129–153 form a disordered region; the sequence is ELMTRPERCSRPKRGAGKYRVPKKR. A compositionally biased stretch (basic residues) spans 139-153; sequence RPKRGAGKYRVPKKR.

It belongs to the UPF0251 family.

In Desulforudis audaxviator (strain MP104C), this protein is UPF0251 protein Daud_0090.